The chain runs to 129 residues: Small ribosomal subunit protein uS11 (129 aa).

This sequence belongs to the universal ribosomal protein uS11 family. In terms of assembly, part of the 30S ribosomal subunit. Interacts with proteins S7 and S18. Binds to IF-3.

Located on the platform of the 30S subunit, it bridges several disparate RNA helices of the 16S rRNA. Forms part of the Shine-Dalgarno cleft in the 70S ribosome. The sequence is that of Small ribosomal subunit protein uS11 from Bartonella bacilliformis (strain ATCC 35685 / KC583 / Herrer 020/F12,63).